Reading from the N-terminus, the 318-residue chain is uncharacterized protein (318 aa).

A compositionally biased stretch (basic and acidic residues) spans 1–22 (MKASQERSEARRTAHSVKEKKY). Disordered regions lie at residues 1–29 (MKAS…ASPR) and 293–318 (DDGD…DDDE).

This is an uncharacterized protein from Ictalurid herpesvirus 1 (strain Auburn) (IcHV-1).